The sequence spans 127 residues: Fluoride-specific ion channel FluC (127 aa).

4 consecutive transmembrane segments (helical) span residues 4–24, 39–59, 68–88, and 102–122; these read LDYL…YLVS, GTII…FAAI, AILF…TFTY, and VAYA…GMIL. Na(+) is bound by residues Gly78 and Thr81.

Belongs to the fluoride channel Fluc/FEX (TC 1.A.43) family.

The protein resides in the cell inner membrane. The enzyme catalyses fluoride(in) = fluoride(out). Na(+) is not transported, but it plays an essential structural role and its presence is essential for fluoride channel function. Its function is as follows. Fluoride-specific ion channel. Important for reducing fluoride concentration in the cell, thus reducing its toxicity. The chain is Fluoride-specific ion channel FluC from Thermotoga petrophila (strain ATCC BAA-488 / DSM 13995 / JCM 10881 / RKU-1).